Here is a 567-residue protein sequence, read N- to C-terminus: Oxygen-dependent choline dehydrogenase (567 aa).

4-33 is a binding site for FAD; that stretch reads DYIIIGAGSAGNVLAARLTEDADVTVLLLE. His473 functions as the Proton acceptor in the catalytic mechanism.

It belongs to the GMC oxidoreductase family. FAD is required as a cofactor.

It catalyses the reaction choline + A = betaine aldehyde + AH2. It carries out the reaction betaine aldehyde + NAD(+) + H2O = glycine betaine + NADH + 2 H(+). The protein operates within amine and polyamine biosynthesis; betaine biosynthesis via choline pathway; betaine aldehyde from choline (cytochrome c reductase route): step 1/1. Its function is as follows. Involved in the biosynthesis of the osmoprotectant glycine betaine. Catalyzes the oxidation of choline to betaine aldehyde and betaine aldehyde to glycine betaine at the same rate. The chain is Oxygen-dependent choline dehydrogenase from Yersinia pestis bv. Antiqua (strain Antiqua).